Consider the following 191-residue polypeptide: Probable DNA-directed RNA polymerase subunit delta (191 aa).

One can recognise an HTH HARE-type domain in the interval 14 to 83 (LSMIEVARAI…GENKWGLRSW (70 aa)). Acidic residues-rich tracts occupy residues 117-136 (GDEDAIDYNDDDPEDEDFTE) and 142-191 (EYDE…EEEV). The disordered stretch occupies residues 117 to 191 (GDEDAIDYND…DEEEEEEEEV (75 aa)).

Belongs to the RpoE family. As to quaternary structure, RNAP is composed of a core of 2 alpha, a beta and a beta' subunits. The core is associated with a delta subunit and one of several sigma factors.

Participates in both the initiation and recycling phases of transcription. In the presence of the delta subunit, RNAP displays an increased specificity of transcription, a decreased affinity for nucleic acids, and an increased efficiency of RNA synthesis because of enhanced recycling. The polypeptide is Probable DNA-directed RNA polymerase subunit delta (Streptococcus agalactiae serotype Ia (strain ATCC 27591 / A909 / CDC SS700)).